Reading from the N-terminus, the 362-residue chain is E3 ubiquitin-protein ligase TM129 (362 aa).

The Lumenal portion of the chain corresponds to 1–6 (MESPEV). The helical transmembrane segment at 7-27 (TFTLAYVVFSVCFVFTPNEFH) threads the bilayer. Topologically, residues 28–56 (SAGITVQNLLSGWLGSEDVAFVHYHIRRS) are cytoplasmic. A helical transmembrane segment spans residues 57-77 (TATLLTHSLLPMGYFIGMCFA). At 78–94 (APEKELYNVYKAADGWK) the chain is on the lumenal side. A helical transmembrane segment spans residues 95–115 (VFVLITVLLPVTTSILAFYWS). Over 116–362 (QKRWGNHPLA…FCIVDVCIVR (247 aa)) the chain is Cytoplasmic. The RING-type; degenerate zinc finger occupies 285 to 350 (CIGCMQTNAN…SSHVPCPTCR (66 aa)).

Belongs to the TMEM129 family. In terms of assembly, integral component of ER-resident dislocation complexes.

It is found in the endoplasmic reticulum membrane. The catalysed reaction is S-ubiquitinyl-[E2 ubiquitin-conjugating enzyme]-L-cysteine + [acceptor protein]-L-lysine = [E2 ubiquitin-conjugating enzyme]-L-cysteine + N(6)-ubiquitinyl-[acceptor protein]-L-lysine.. The protein operates within protein modification; protein ubiquitination. Functionally, E3 ubiquitin-protein ligase involved in ER-associated protein degradation, preferentially associates with the E2 enzyme UBE2J2. The polypeptide is E3 ubiquitin-protein ligase TM129 (tmem129) (Xenopus tropicalis (Western clawed frog)).